A 327-amino-acid chain; its full sequence is Methionine import ATP-binding protein MetN (327 aa).

One can recognise an ABC transporter domain in the interval 3–239 (VELKNIEKIY…PKHAVTKELL (237 aa)). Residue 36-43 (GYSGAGKS) coordinates ATP.

Belongs to the ABC transporter superfamily. Methionine importer (TC 3.A.1.24) family. The complex is composed of two ATP-binding proteins (MetN), two transmembrane proteins (MetI) and a solute-binding protein (MetQ).

It localises to the cell inner membrane. It carries out the reaction L-methionine(out) + ATP + H2O = L-methionine(in) + ADP + phosphate + H(+). The catalysed reaction is D-methionine(out) + ATP + H2O = D-methionine(in) + ADP + phosphate + H(+). Part of the ABC transporter complex MetNIQ involved in methionine import. Responsible for energy coupling to the transport system. This is Methionine import ATP-binding protein MetN from Helicobacter pylori (strain J99 / ATCC 700824) (Campylobacter pylori J99).